The primary structure comprises 85 residues: ATP synthase subunit c (85 aa).

2 helical membrane passes run 1–21 (MLAW…ALVG) and 53–73 (LLFA…VALI).

The protein belongs to the ATPase C chain family. In terms of assembly, F-type ATPases have 2 components, F(1) - the catalytic core - and F(0) - the membrane proton channel. F(1) has five subunits: alpha(3), beta(3), gamma(1), delta(1), epsilon(1). F(0) has three main subunits: a(1), b(2) and c(10-14). The alpha and beta chains form an alternating ring which encloses part of the gamma chain. F(1) is attached to F(0) by a central stalk formed by the gamma and epsilon chains, while a peripheral stalk is formed by the delta and b chains.

It localises to the cell inner membrane. Functionally, f(1)F(0) ATP synthase produces ATP from ADP in the presence of a proton or sodium gradient. F-type ATPases consist of two structural domains, F(1) containing the extramembraneous catalytic core and F(0) containing the membrane proton channel, linked together by a central stalk and a peripheral stalk. During catalysis, ATP synthesis in the catalytic domain of F(1) is coupled via a rotary mechanism of the central stalk subunits to proton translocation. In terms of biological role, key component of the F(0) channel; it plays a direct role in translocation across the membrane. A homomeric c-ring of between 10-14 subunits forms the central stalk rotor element with the F(1) delta and epsilon subunits. This chain is ATP synthase subunit c, found in Dictyoglomus turgidum (strain DSM 6724 / Z-1310).